Here is a 519-residue protein sequence, read N- to C-terminus: Aspartokinase (519 aa).

Serine 326 is subject to Phosphoserine. At threonine 328 the chain carries Phosphothreonine. Residues leucine 436–serine 518 form the ACT domain.

Belongs to the aspartokinase family.

It catalyses the reaction L-aspartate + ATP = 4-phospho-L-aspartate + ADP. It functions in the pathway amino-acid biosynthesis; L-methionine biosynthesis via de novo pathway; L-homoserine from L-aspartate: step 1/3. Its pathway is amino-acid biosynthesis; L-threonine biosynthesis; L-threonine from L-aspartate: step 1/5. Its function is as follows. Phosphorylates aspartate, the first step in the biosynthesis of amino acids that derive from aspartate (the aspartate family of amino acids), including methioinine and threonine, the latter of which is a precursor to isoleucine. This is Aspartokinase from Schizosaccharomyces pombe (strain 972 / ATCC 24843) (Fission yeast).